Reading from the N-terminus, the 862-residue chain is Axin-1 (862 aa).

The interval 1–78 (MNIQEQGFPL…GYEPEGSASP (78 aa)) is disordered. Positions 20 to 29 (APRPPVPGEE) match the Tankyrase-binding motif motif. 2 positions are modified to phosphoserine; by CK1: serine 75 and serine 77. Residues 88–211 (SLHSLLDDQD…LKSDIYLEYT (124 aa)) enclose the RGS domain. Residues 209–338 (EYTRTGSESP…DADTLSLTDS (130 aa)) are interaction with TP53. Disordered stretches follow at residues 215-289 (SESP…YSEG) and 316-344 (TSANDSEQQSLSSDADTLSLTDSSVDGIP). Serine 217 is modified (phosphoserine; by CK1). Residues 242–258 (NEDEEWKCDQDMDEDDG) show a composition bias toward acidic residues. Residues 325-339 (SLSSDADTLSLTDSS) show a composition bias toward low complexity. The segment at 348–433 (IRKQHRREMQ…DGDPSSGPPG (86 aa)) is interaction with GSK3B. Residues 353–411 (RREMQESVQVNGRVPLPHIPRTYRVPKEVRVEPQKFAEELIHRLEAVQRTREAEEKLEE) are interaction with SIAH1 and SIAH2. The tract at residues 413–441 (LKRVRMEEEGEDGDPSSGPPGPCHKLPPA) is disordered. Positions 429-441 (SGPPGPCHKLPPA) are enriched in pro residues. The interaction with CTNNB1 stretch occupies residues 434 to 502 (PCHKLPPAPA…SPDSGHVAKM (69 aa)). Serine 469 carries the post-translational modification Phosphoserine; by CK1. Residues 480 to 500 (RTPGRQSPGPGHRSPDSGHVA) form a disordered region. Position 481 is a phosphothreonine; by GSK3-beta (threonine 481). Serine 486, serine 493, and serine 511 each carry phosphoserine. An interaction with RNF111 region spans residues 507 to 757 (GGAASGHGKH…PVLHVVPAVS (251 aa)). The span at 531 to 544 (HHRHVHHHVHHSTA) shows a compositional bias: basic residues. 2 disordered regions span residues 531-629 (HHRH…AEKN) and 641-679 (KEISRHRRTGHGSSGTRKPQPHENSRPLSLEHPWAGPQL). The span at 545-556 (RPKEQVEAEATR) shows a compositional bias: basic and acidic residues. Residues 575–789 (SRGYSESVGA…CDSIVVAYYF (215 aa)) form an interaction with PPP2CA region. At serine 581 the chain carries Phosphoserine. The segment at 677-752 (PQLRTSVQPS…RPACAPVLHV (76 aa)) is interaction with HIPK2. Positions 780–862 (CDSIVVAYYF…KIIGKVEKVD (83 aa)) constitute a DIX domain. Glycyl lysine isopeptide (Lys-Gly) (interchain with G-Cter in SUMO) cross-links involve residues lysine 857 and lysine 860.

Homodimer. Interacts with ZBED3; the interaction is direct, enhanced by protein kinase GSK3B and casein kinase CSNK1E activities and decreases GSK3B-induced beta-catenin serine and threonine phosphorylations. Component of the beta-catenin destruction complex, containing at least, CTNNB1, an axin and GSK3B, that regulates CTNNB1 protein levels through phosphorylation and ubiquitination. Interacts with CTNNB1 (via the armadillo repeats 2-7). Interacts with GSK3B; the interaction hyperphosphorylates CTNNB1 leading to its ubiquitination and destruction. Component of the AXIN1-HIPK2-TP53 complex. Interacts directly in the complex with TP53 and HIPK2. Interacts with DAXX; the interaction stimulates the interaction of DAXX with TP53, stimulates 'Ser-46' phosphorylation of TP53 and induces cell death on UV irradiation. Also binds APC, SMAD6, SMAD7 and RNF111. Interacts with DIXDC1; prevents interaction with MAP3K1. Interacts with MAP3K4. Interacts with ANKRD6 and AIDA. Interacts with MDFI; the interaction decreases AXIN1-mediated JUN N-terminal kinase (JNK) activation. Interacts with MDFIC; the interaction inhibits beta-cateninin-mediated signaling and AXIN1-mediated JUN N-terminal kinase (JNK) activation. Interacts with LRP5 (via its phosphorylated PPPSP motifs); the interaction is stimulated by WNT1 and GSK3B and activates beta-catenin signaling. Interacts (via the C-terminal) with PPP1CA; the interaction dephosphorylates AXIN1 and regulates interaction with GSK3B. Interacts with PPP2CA; the interaction dephosphorylates AXIN1. Interacts with MACF1. Found in a complex composed of MACF1, APC, AXIN1, CTNNB1 and GSK3B. Interacts with TNKS. Interacts with DAB2; the interaction is mutually exclusive with the AXIN1:PPP1CA interaction. Interacts with WDR26. Interacts with GID8. Interacts with SIAH1 and SIAH2; both probably catalyze AXIN1 ubiquitination and subsequent proteasome-mediated ubiquitin-dependent degradation. Interaction with GSK3B and AXIN1 is competitive. In terms of processing, phosphorylation and dephosphorylation of AXIN1 regulates assembly and function of the beta-catenin complex. Phosphorylated by CK1 and GSK3B. Dephosphorylated by PPP1CA and PPP2CA. Phosphorylation by CK1 enhances binding of GSK3B to AXIN1. ADP-ribosylated by tankyrase TNKS and TNKS2. Poly-ADP-ribosylated protein is recognized by RNF146, followed by ubiquitination at 'Lys-48' and subsequent activation of the Wnt signaling pathway. Post-translationally, ubiquitinated by RNF146 when poly-ADP-ribosylated, leading to its degradation and subsequent activation of the Wnt signaling pathway. Sumoylation at Lys-857 and Lys-860 prevents ubiquitination and degradation. Sumoylation is required for AXIN1-mediated JNK activation. Deubiquitinated by USP34, deubiquitinated downstream of beta-catenin stabilization step: deubiquitination is important for nuclear accumulation during Wnt signaling to positively regulate beta-catenin (CTNBB1)-mediated transcription. Ubiquitination by SIAH1 and SIAH2 induces its proteasomal degradation as part of the activation of the Wnt signaling pathway. Ubiquitously expressed.

It localises to the cytoplasm. The protein localises to the nucleus. Its subcellular location is the membrane. The protein resides in the cell membrane. Its function is as follows. Component of the beta-catenin destruction complex required for regulating CTNNB1 levels through phosphorylation and ubiquitination, and modulating Wnt-signaling. Controls dorsoventral patterning via two opposing effects; down-regulates CTNNB1 to inhibit the Wnt signaling pathway and ventralize embryos, but also dorsalizes embryos by activating a Wnt-independent JNK signaling pathway. In Wnt signaling, probably facilitates the phosphorylation of CTNNB1 and APC by GSK3B. Likely to function as a tumor suppressor. Enhances TGF-beta signaling by recruiting the RNF111 E3 ubiquitin ligase and promoting the degradation of inhibitory SMAD7. Also a component of the AXIN1-HIPK2-TP53 complex which controls cell growth, apoptosis and development. Facilitates the phosphorylation of TP53 by HIPK2 upon ultraviolet irradiation. The polypeptide is Axin-1 (AXIN1) (Homo sapiens (Human)).